A 662-amino-acid chain; its full sequence is Interferon-induced GTP-binding protein Mx1 (662 aa).

An N-acetylmethionine; in Interferon-induced GTP-binding protein Mx1; alternate modification is found at methionine 1. The region spanning aspartate 67–proline 340 is the Dynamin-type G domain. Residues glycine 77 to serine 84 are G1 motif. Glycine 77–serine 84 provides a ligand contact to GTP. The tract at residues valine 102 to arginine 104 is G2 motif. Positions aspartate 178–glycine 181 are G3 motif. Residues aspartate 178–isoleucine 182 and threonine 247–aspartate 250 each bind GTP. The interval threonine 247–aspartate 250 is G4 motif. Positions lysine 279–glycine 282 are G5 motif. Positions leucine 341 to glutamate 366 are bundle signaling element (BSE). The interval glutamate 366–cysteine 533 is middle domain. A stalk region spans residues aspartate 367–glutamate 632. The segment at lysine 554–lysine 557 is critical for lipid-binding. Positions methionine 574 to glycine 662 constitute a GED domain.

Belongs to the TRAFAC class dynamin-like GTPase superfamily. Dynamin/Fzo/YdjA family. Homotetramer. Oligomerizes into multimeric filamentous or ring-like structures by virtue of its stalk domain. Oligomerization is critical for GTPase activity, protein stability, and recognition of viral target structures. Interacts with TRPC1, TRPC3, TRPC4, TRPC5, TRPC6 and TRPC7. Interacts with HSPA5. Interacts with DDX39A and DDX39B. Interacts with TUBB/TUBB5. The GTP-bound form interacts (via C-terminus) with THOV P5 protein. The GTP-bound form interacts with LACV protein N. Interacts with CCHFV protein N. In terms of processing, ISGylated.

The protein localises to the cytoplasm. Its subcellular location is the endoplasmic reticulum membrane. It is found in the perinuclear region. It localises to the nucleus. Functionally, interferon-induced dynamin-like GTPase with antiviral activity against a wide range of RNA viruses and some DNA viruses. Its target viruses include negative-stranded RNA viruses and HBV through binding and inactivation of their ribonucleocapsid. May also antagonize reoviridae and asfarviridae replication. Inhibits thogoto virus (THOV) replication by preventing the nuclear import of viral nucleocapsids. Inhibits La Crosse virus (LACV) replication by sequestering viral nucleoprotein in perinuclear complexes, preventing genome amplification, budding, and egress. Inhibits influenza A virus (IAV) replication by decreasing or delaying NP synthesis and by blocking endocytic traffic of incoming virus particles. Enhances ER stress-mediated cell death after influenza virus infection. May regulate the calcium channel activity of TRPCs. The chain is Interferon-induced GTP-binding protein Mx1 (MX1) from Homo sapiens (Human).